Reading from the N-terminus, the 137-residue chain is Small ribosomal subunit protein bS6 (137 aa).

A disordered region spans residues 99 to 137; the sequence is LSPMKAAESREDRRSGGDDRPRRSADSEERQSASQDEEE. Basic and acidic residues predominate over residues 105 to 129; it reads AESREDRRSGGDDRPRRSADSEERQ.

It belongs to the bacterial ribosomal protein bS6 family.

Its function is as follows. Binds together with bS18 to 16S ribosomal RNA. This chain is Small ribosomal subunit protein bS6, found in Marinobacter nauticus (strain ATCC 700491 / DSM 11845 / VT8) (Marinobacter aquaeolei).